Here is a 236-residue protein sequence, read N- to C-terminus: 2,3,4,5-tetrahydropyridine-2,6-dicarboxylate N-acetyltransferase (236 aa).

Belongs to the transferase hexapeptide repeat family. DapH subfamily.

It carries out the reaction (S)-2,3,4,5-tetrahydrodipicolinate + acetyl-CoA + H2O = L-2-acetamido-6-oxoheptanedioate + CoA. It participates in amino-acid biosynthesis; L-lysine biosynthesis via DAP pathway; LL-2,6-diaminopimelate from (S)-tetrahydrodipicolinate (acetylase route): step 1/3. Catalyzes the transfer of an acetyl group from acetyl-CoA to tetrahydrodipicolinate. The protein is 2,3,4,5-tetrahydropyridine-2,6-dicarboxylate N-acetyltransferase of Limosilactobacillus reuteri (strain DSM 20016) (Lactobacillus reuteri).